Reading from the N-terminus, the 184-residue chain is ATP synthase subunit delta (184 aa).

Belongs to the ATPase delta chain family. As to quaternary structure, F-type ATPases have 2 components, F(1) - the catalytic core - and F(0) - the membrane proton channel. F(1) has five subunits: alpha(3), beta(3), gamma(1), delta(1), epsilon(1). F(0) has three main subunits: a(1), b(2) and c(10-14). The alpha and beta chains form an alternating ring which encloses part of the gamma chain. F(1) is attached to F(0) by a central stalk formed by the gamma and epsilon chains, while a peripheral stalk is formed by the delta and b chains.

It is found in the cell inner membrane. Its function is as follows. F(1)F(0) ATP synthase produces ATP from ADP in the presence of a proton or sodium gradient. F-type ATPases consist of two structural domains, F(1) containing the extramembraneous catalytic core and F(0) containing the membrane proton channel, linked together by a central stalk and a peripheral stalk. During catalysis, ATP synthesis in the catalytic domain of F(1) is coupled via a rotary mechanism of the central stalk subunits to proton translocation. Functionally, this protein is part of the stalk that links CF(0) to CF(1). It either transmits conformational changes from CF(0) to CF(1) or is implicated in proton conduction. The chain is ATP synthase subunit delta from Rickettsia rickettsii (strain Iowa).